Here is a 354-residue protein sequence, read N- to C-terminus: Cysteine proteinase A (354 aa).

Positions 1 to 24 (MARRNPLLFAIVVTILFVVCYGSA) are cleaved as a signal peptide. A propeptide spans 25–125 (LIAQTPPPVD…HKEDVHVDDS (101 aa)) (activation peptide). 3 cysteine pairs are disulfide-bonded: cysteine 150/cysteine 191, cysteine 184/cysteine 229, and cysteine 282/cysteine 330. Cysteine 153 is a catalytic residue. Residue asparagine 208 is glycosylated (N-linked (GlcNAc...) asparagine). Residues histidine 289 and asparagine 309 contribute to the active site.

This sequence belongs to the peptidase C1 family.

The protein is Cysteine proteinase A (LMCPA) of Leishmania mexicana.